Consider the following 471-residue polypeptide: Putative multidrug resistance protein MdtD (471 aa).

Residues 1 to 11 are Periplasmic-facing; that stretch reads MTDLPDNTRWQ. The chain crosses the membrane as a helical span at residues 12–32; it reads LWIVAFGFFMQSLDTTIVNTA. The Cytoplasmic segment spans residues 33–48; it reads LPSMAQSLGESPLHMH. The helical transmembrane segment at 49–69 threads the bilayer; that stretch reads MVIVSYVLTVAVMLPASGWLA. Over 70 to 76 the chain is Periplasmic; that stretch reads DKVGVRN. Residues 77 to 97 traverse the membrane as a helical segment; the sequence is IFFTAIVLFTLGSLFCALSGT. Residues 98–101 are Cytoplasmic-facing; sequence LNEL. The helical transmembrane segment at 102–124 threads the bilayer; that stretch reads LLARALQGVGGAMMVPVGRLTVM. Topologically, residues 125-137 are periplasmic; the sequence is KIVPREQYMAAMT. Residues 138–158 traverse the membrane as a helical segment; it reads FVTLPGQVGPLLGPALGGLLV. Residues 159-164 lie on the Cytoplasmic side of the membrane; the sequence is EYASWH. The chain crosses the membrane as a helical span at residues 165–185; sequence WIFLINIPVGIIGAIATLMLM. At 186-196 the chain is on the periplasmic side; the sequence is PNYTMQTRRFD. A helical membrane pass occupies residues 197–217; that stretch reads LSGFLLLAIGMAVLTLALDGS. At 218 to 224 the chain is on the cytoplasmic side; the sequence is KGTGLSP. The helical transmembrane segment at 225–245 threads the bilayer; the sequence is LAITGLVAVGVVALVLYLLHA. The Periplasmic segment spans residues 246–262; that stretch reads RNNNRALFSLKLFRTRT. Residues 263–283 form a helical membrane-spanning segment; that stretch reads FSLGLAGSFAGRIGSGMLPFM. Topologically, residues 284-285 are cytoplasmic; sequence TP. The helical transmembrane segment at 286–306 threads the bilayer; it reads VFLQIGLGFSPFHAGLMMIPM. Residues 307–341 are Periplasmic-facing; that stretch reads VLGSMGMKRIVVQVVNRFGYRRVLVATTLGLSLVT. A helical membrane pass occupies residues 342 to 362; sequence LLFMTTALLGWYYVLPFVLFL. Residues 363 to 395 are Cytoplasmic-facing; sequence QGMVNSTRFSSMNTLTLKDLPDNLASSGNSLLS. Residues 396-416 form a helical membrane-spanning segment; it reads MIMQLSMSIGVTIAGLLLGLF. The Periplasmic portion of the chain corresponds to 417-430; that stretch reads GSQHVSVDSGTTQT. A helical membrane pass occupies residues 431 to 451; sequence VFMYTWLSMAFIIALPAFIFA. Topologically, residues 452-471 are cytoplasmic; sequence RVPNDTHQNVAISRRKRSAQ.

Belongs to the major facilitator superfamily. TCR/Tet family.

The protein localises to the cell inner membrane. This chain is Putative multidrug resistance protein MdtD, found in Escherichia coli O17:K52:H18 (strain UMN026 / ExPEC).